The sequence spans 246 residues: Orotidine 5'-phosphate decarboxylase (246 aa).

Substrate-binding positions include D18, K39, 66–75 (DLKFHDIPAT), T130, R192, Q201, G221, and R222. Catalysis depends on K68, which acts as the Proton donor.

This sequence belongs to the OMP decarboxylase family. Type 1 subfamily. Homodimer.

It catalyses the reaction orotidine 5'-phosphate + H(+) = UMP + CO2. Its pathway is pyrimidine metabolism; UMP biosynthesis via de novo pathway; UMP from orotate: step 2/2. Catalyzes the decarboxylation of orotidine 5'-monophosphate (OMP) to uridine 5'-monophosphate (UMP). This is Orotidine 5'-phosphate decarboxylase from Parasynechococcus marenigrum (strain WH8102).